The chain runs to 317 residues: Ribosomal RNA small subunit methyltransferase H (317 aa).

S-adenosyl-L-methionine contacts are provided by residues 34 to 36 (GGH), D53, F80, D98, and Q105.

The protein belongs to the methyltransferase superfamily. RsmH family.

It localises to the cytoplasm. It catalyses the reaction cytidine(1402) in 16S rRNA + S-adenosyl-L-methionine = N(4)-methylcytidine(1402) in 16S rRNA + S-adenosyl-L-homocysteine + H(+). Its function is as follows. Specifically methylates the N4 position of cytidine in position 1402 (C1402) of 16S rRNA. In Tropheryma whipplei (strain TW08/27) (Whipple's bacillus), this protein is Ribosomal RNA small subunit methyltransferase H.